The primary structure comprises 205 residues: Holliday junction branch migration complex subunit RuvA (205 aa).

Residues 1–64 (MIGKLKGLID…EDQIKLFGFR (64 aa)) form a domain I region. Residues 65–143 (TDHEREWFRL…ALSNVDPAVV (79 aa)) form a domain II region. The interval 144–154 (QLSGALDDNRA) is flexible linker. The interval 154–205 (APRPVTDAISALVNLGYGQPQAAAAIAAAARAAGDDAATAQLIKLGLKELSK) is domain III.

The protein belongs to the RuvA family. In terms of assembly, homotetramer. Forms an RuvA(8)-RuvB(12)-Holliday junction (HJ) complex. HJ DNA is sandwiched between 2 RuvA tetramers; dsDNA enters through RuvA and exits via RuvB. An RuvB hexamer assembles on each DNA strand where it exits the tetramer. Each RuvB hexamer is contacted by two RuvA subunits (via domain III) on 2 adjacent RuvB subunits; this complex drives branch migration. In the full resolvosome a probable DNA-RuvA(4)-RuvB(12)-RuvC(2) complex forms which resolves the HJ.

It localises to the cytoplasm. In terms of biological role, the RuvA-RuvB-RuvC complex processes Holliday junction (HJ) DNA during genetic recombination and DNA repair, while the RuvA-RuvB complex plays an important role in the rescue of blocked DNA replication forks via replication fork reversal (RFR). RuvA specifically binds to HJ cruciform DNA, conferring on it an open structure. The RuvB hexamer acts as an ATP-dependent pump, pulling dsDNA into and through the RuvAB complex. HJ branch migration allows RuvC to scan DNA until it finds its consensus sequence, where it cleaves and resolves the cruciform DNA. In Rhodopseudomonas palustris (strain BisB5), this protein is Holliday junction branch migration complex subunit RuvA.